Reading from the N-terminus, the 194-residue chain is Probable nicotinate-nucleotide adenylyltransferase (194 aa).

This sequence belongs to the NadD family.

The catalysed reaction is nicotinate beta-D-ribonucleotide + ATP + H(+) = deamido-NAD(+) + diphosphate. The protein operates within cofactor biosynthesis; NAD(+) biosynthesis; deamido-NAD(+) from nicotinate D-ribonucleotide: step 1/1. Its function is as follows. Catalyzes the reversible adenylation of nicotinate mononucleotide (NaMN) to nicotinic acid adenine dinucleotide (NaAD). The polypeptide is Probable nicotinate-nucleotide adenylyltransferase (Chlorobium luteolum (strain DSM 273 / BCRC 81028 / 2530) (Pelodictyon luteolum)).